A 123-amino-acid chain; its full sequence is MPTVNQLIRKPRQTKPARNKVPALKGCPQRRGVCTRVYTTTPKKPNSALRKVAKVRLTTGIEAVCYIPGEGHNLQEHSVVLIRGGRVKDLPGVRYHILRGVLDTQGVKDRKQRRSLYGAKRPK.

Asp-89 carries the 3-methylthioaspartic acid modification.

The protein belongs to the universal ribosomal protein uS12 family. As to quaternary structure, part of the 30S ribosomal subunit. Contacts proteins S8 and S17. May interact with IF1 in the 30S initiation complex.

In terms of biological role, with S4 and S5 plays an important role in translational accuracy. Its function is as follows. Interacts with and stabilizes bases of the 16S rRNA that are involved in tRNA selection in the A site and with the mRNA backbone. Located at the interface of the 30S and 50S subunits, it traverses the body of the 30S subunit contacting proteins on the other side and probably holding the rRNA structure together. The combined cluster of proteins S8, S12 and S17 appears to hold together the shoulder and platform of the 30S subunit. The protein is Small ribosomal subunit protein uS12 of Phenylobacterium zucineum (strain HLK1).